The sequence spans 450 residues: Phosphoglucosamine mutase (450 aa).

Ser-101 (phosphoserine intermediate) is an active-site residue. Mg(2+) is bound by residues Ser-101, Asp-241, Asp-243, and Asp-245. Ser-101 bears the Phosphoserine mark.

The protein belongs to the phosphohexose mutase family. Requires Mg(2+) as cofactor. In terms of processing, activated by phosphorylation.

It carries out the reaction alpha-D-glucosamine 1-phosphate = D-glucosamine 6-phosphate. Catalyzes the conversion of glucosamine-6-phosphate to glucosamine-1-phosphate. This chain is Phosphoglucosamine mutase, found in Listeria welshimeri serovar 6b (strain ATCC 35897 / DSM 20650 / CCUG 15529 / CIP 8149 / NCTC 11857 / SLCC 5334 / V8).